Here is a 213-residue protein sequence, read N- to C-terminus: uncharacterized protein (213 aa).

Positions 53, 74, and 96 each coordinate S-adenosyl-L-methionine.

The protein belongs to the methyltransferase superfamily. YrrT family.

Its function is as follows. Could be a S-adenosyl-L-methionine-dependent methyltransferase. This is an uncharacterized protein from Bacillus pumilus (strain SAFR-032).